Reading from the N-terminus, the 334-residue chain is tRNA-dihydrouridine synthase B (334 aa).

Residues 16 to 18 (PMA) and Gln70 contribute to the FMN site. Cys100 serves as the catalytic Proton donor. Residues Lys139, 200–202 (NGD), and 224–225 (GR) contribute to the FMN site.

This sequence belongs to the Dus family. DusB subfamily. FMN is required as a cofactor.

It catalyses the reaction a 5,6-dihydrouridine in tRNA + NAD(+) = a uridine in tRNA + NADH + H(+). The enzyme catalyses a 5,6-dihydrouridine in tRNA + NADP(+) = a uridine in tRNA + NADPH + H(+). Catalyzes the synthesis of 5,6-dihydrouridine (D), a modified base found in the D-loop of most tRNAs, via the reduction of the C5-C6 double bond in target uridines. The polypeptide is tRNA-dihydrouridine synthase B (Serratia marcescens).